A 384-amino-acid chain; its full sequence is Glucose-1-phosphate adenylyltransferase (384 aa).

Alpha-D-glucose 1-phosphate contacts are provided by residues Y103, G168, 183 to 184, and S194; that span reads EK.

It belongs to the bacterial/plant glucose-1-phosphate adenylyltransferase family. In terms of assembly, homotetramer.

It catalyses the reaction alpha-D-glucose 1-phosphate + ATP + H(+) = ADP-alpha-D-glucose + diphosphate. The protein operates within glycan biosynthesis; glycogen biosynthesis. Functionally, involved in the biosynthesis of ADP-glucose, a building block required for the elongation reactions to produce glycogen. Catalyzes the reaction between ATP and alpha-D-glucose 1-phosphate (G1P) to produce pyrophosphate and ADP-Glc. In Fusobacterium nucleatum subsp. nucleatum (strain ATCC 25586 / DSM 15643 / BCRC 10681 / CIP 101130 / JCM 8532 / KCTC 2640 / LMG 13131 / VPI 4355), this protein is Glucose-1-phosphate adenylyltransferase.